Here is a 96-residue protein sequence, read N- to C-terminus: Co-chaperonin GroES (96 aa).

The protein belongs to the GroES chaperonin family. As to quaternary structure, heptamer of 7 subunits arranged in a ring. Interacts with the chaperonin GroEL.

The protein localises to the cytoplasm. Together with the chaperonin GroEL, plays an essential role in assisting protein folding. The GroEL-GroES system forms a nano-cage that allows encapsulation of the non-native substrate proteins and provides a physical environment optimized to promote and accelerate protein folding. GroES binds to the apical surface of the GroEL ring, thereby capping the opening of the GroEL channel. The polypeptide is Co-chaperonin GroES (Delftia acidovorans (strain DSM 14801 / SPH-1)).